Here is a 351-residue protein sequence, read N- to C-terminus: RISC-loading complex subunit tarbp2 (351 aa).

The segment at 1–22 (MSENGDCEHQTSSGFPSIEQML) is disordered. DRBM domains are found at residues 29–96 (TPIS…LLKE) and 150–218 (NPVG…QIHQ). The tract at residues 221–243 (AEHRESGETEPEEDQFSVGKLDG) is disordered. One can recognise a DRBM 3 domain in the interval 278-346 (GFCSLLQDLS…AHNALQYLKI (69 aa)).

This sequence belongs to the TARBP2 family. In terms of assembly, self-associates. Component of the RISC loading complex (RLC), or micro-RNA (miRNA) loading complex (miRLC), which is composed of dicer1, ago2 and tarbp2. Note that the trimeric RLC/miRLC is also referred to as RISC.

The protein localises to the cytoplasm. In terms of biological role, required for formation of the RNA induced silencing complex (RISC). Component of the RISC loading complex (RLC), also known as the micro-RNA (miRNA) loading complex (miRLC), which is composed of dicer1, ago2 and tarbp2. Within the RLC/miRLC, dicer1 and tarbp2 are required to process precursor miRNAs (pre-miRNAs) to mature miRNAs and then load them onto ago2. ago2 bound to the mature miRNA constitutes the minimal RISC and may subsequently dissociate from dicer1 and tarbp2. May also play a role in the production of short interfering RNAs (siRNAs) from double-stranded RNA (dsRNA) by dicer1. In Xenopus laevis (African clawed frog), this protein is RISC-loading complex subunit tarbp2 (tarbp2).